Reading from the N-terminus, the 321-residue chain is tRNA U34 carboxymethyltransferase (321 aa).

Residues Lys90, Trp104, Lys109, Gly129, 151–153, 180–181, Met195, Tyr199, and Arg314 contribute to the carboxy-S-adenosyl-L-methionine site; these read DPT and IE.

Belongs to the class I-like SAM-binding methyltransferase superfamily. CmoB family. In terms of assembly, homotetramer.

The enzyme catalyses carboxy-S-adenosyl-L-methionine + 5-hydroxyuridine(34) in tRNA = 5-carboxymethoxyuridine(34) in tRNA + S-adenosyl-L-homocysteine + H(+). Its function is as follows. Catalyzes carboxymethyl transfer from carboxy-S-adenosyl-L-methionine (Cx-SAM) to 5-hydroxyuridine (ho5U) to form 5-carboxymethoxyuridine (cmo5U) at position 34 in tRNAs. The protein is tRNA U34 carboxymethyltransferase of Haemophilus influenzae (strain PittEE).